A 195-amino-acid chain; its full sequence is Cysteine/O-acetylserine efflux protein (195 aa).

Over Met1–Phe9 the chain is Periplasmic. The chain crosses the membrane as a helical span at residues Trp10–Thr32. Residues Ser33–Met46 are Cytoplasmic-facing. Residues Ser47–Ile67 form a helical membrane-spanning segment. Over Asp68 to Pro69 the chain is Periplasmic. Residues Ala70–Ile90 traverse the membrane as a helical segment. Residues Ala91–Pro104 are Cytoplasmic-facing. A helical transmembrane segment spans residues Ile105–Val125. Residues Thr126–Trp141 lie on the Periplasmic side of the membrane. Residues Val142 to Leu162 form a helical membrane-spanning segment. Topologically, residues Ala163–Arg176 are cytoplasmic. A helical transmembrane segment spans residues Gln177 to Phe194. A topological domain (periplasmic) is located at residue Tyr195.

The protein belongs to the Rht family.

The protein localises to the cell inner membrane. The enzyme catalyses O-acetyl-L-serine(in) = O-acetyl-L-serine(out). The catalysed reaction is L-cysteine(in) = L-cysteine(out). In terms of biological role, exporter of O-acetylserine (OAS) and cysteine. The protein is Cysteine/O-acetylserine efflux protein (eamB) of Shigella flexneri serotype 5b (strain 8401).